The following is a 113-amino-acid chain: Outer membrane protein assembly factor BamE (113 aa).

The signal sequence occupies residues 1-19 (MRCKTLTAAAAVLLMLTAG). Residue Cys20 is the site of N-palmitoyl cysteine attachment. Cys20 is lipidated: S-diacylglycerol cysteine.

The protein belongs to the BamE family. Part of the Bam complex, which is composed of the outer membrane protein BamA, and four lipoproteins BamB, BamC, BamD and BamE.

Its subcellular location is the cell outer membrane. Functionally, part of the outer membrane protein assembly complex, which is involved in assembly and insertion of beta-barrel proteins into the outer membrane. The polypeptide is Outer membrane protein assembly factor BamE (Escherichia coli O6:H1 (strain CFT073 / ATCC 700928 / UPEC)).